The primary structure comprises 556 residues: Myb/SANT-like DNA-binding domain-containing protein 2 (556 aa).

2 stretches are compositionally biased toward polar residues: residues 1–10 and 36–45; these read MAASCGSSQL and GNPSLSDPST. The tract at residues 1-82 is disordered; the sequence is MAASCGSSQL…GGASPSVSFS (82 aa). Residues 56–74 show a composition bias toward gly residues; the sequence is PAAGGAGLGGGGAAGGRGG. The 71-residue stretch at 99–169 folds into the Myb-like domain; sequence SWTPAETNAL…QCRERIKTLR (71 aa). The disordered stretch occupies residues 431 to 458; that stretch reads PRSPLAEPRGADPSNETPGELEVPSPQA.

The protein is Myb/SANT-like DNA-binding domain-containing protein 2 (MSANTD2) of Gallus gallus (Chicken).